The following is a 397-amino-acid chain: Tryptophan synthase beta chain (397 aa).

K88 bears the N6-(pyridoxal phosphate)lysine mark.

The protein belongs to the TrpB family. As to quaternary structure, tetramer of two alpha and two beta chains. Pyridoxal 5'-phosphate is required as a cofactor.

It catalyses the reaction (1S,2R)-1-C-(indol-3-yl)glycerol 3-phosphate + L-serine = D-glyceraldehyde 3-phosphate + L-tryptophan + H2O. The protein operates within amino-acid biosynthesis; L-tryptophan biosynthesis; L-tryptophan from chorismate: step 5/5. Functionally, the beta subunit is responsible for the synthesis of L-tryptophan from indole and L-serine. The protein is Tryptophan synthase beta chain (trpB) of Haemophilus influenzae (strain ATCC 51907 / DSM 11121 / KW20 / Rd).